A 313-amino-acid chain; its full sequence is HPr kinase/phosphorylase (313 aa).

Residues histidine 136 and lysine 157 contribute to the active site. 151–158 (GDSGIGKS) is a binding site for ATP. A Mg(2+)-binding site is contributed by serine 158. The Proton acceptor; for phosphorylation activity. Proton donor; for dephosphorylation activity role is filled by aspartate 175. The segment at 199–208 (LEIRGLGIIN) is important for the catalytic mechanism of both phosphorylation and dephosphorylation. Glutamate 200 contacts Mg(2+). The active site involves arginine 241. The important for the catalytic mechanism of dephosphorylation stretch occupies residues 262-267 (PVRPGR).

It belongs to the HPrK/P family. In terms of assembly, homohexamer. Requires Mg(2+) as cofactor.

It carries out the reaction [HPr protein]-L-serine + ATP = [HPr protein]-O-phospho-L-serine + ADP + H(+). The catalysed reaction is [HPr protein]-O-phospho-L-serine + phosphate + H(+) = [HPr protein]-L-serine + diphosphate. Functionally, catalyzes the ATP- as well as the pyrophosphate-dependent phosphorylation of a specific serine residue in HPr, a phosphocarrier protein of the phosphoenolpyruvate-dependent sugar phosphotransferase system (PTS). HprK/P also catalyzes the pyrophosphate-producing, inorganic phosphate-dependent dephosphorylation (phosphorolysis) of seryl-phosphorylated HPr (P-Ser-HPr). The two antagonistic activities of HprK/P are regulated by several intracellular metabolites, which change their concentration in response to the absence or presence of rapidly metabolisable carbon sources (glucose, fructose, etc.) in the growth medium. Therefore, by controlling the phosphorylation state of HPr, HPrK/P is a sensor enzyme that plays a major role in the regulation of carbon metabolism and sugar transport: it mediates carbon catabolite repression (CCR), and regulates PTS-catalyzed carbohydrate uptake and inducer exclusion. This chain is HPr kinase/phosphorylase, found in Staphylococcus saprophyticus subsp. saprophyticus (strain ATCC 15305 / DSM 20229 / NCIMB 8711 / NCTC 7292 / S-41).